The primary structure comprises 302 residues: Alpha-ketoglutarate-dependent dioxygenase alkB homolog 4 (302 aa).

A2 is subject to N-acetylalanine. A Phosphothreonine modification is found at T8. A Fe2OG dioxygenase domain is found at 150-274; sequence PVEQCNLDYC…RVCVTFRELS (125 aa). Fe cation-binding residues include H169, D171, and H254. R265 provides a ligand contact to 2-oxoglutarate.

The protein belongs to the alkB family. Interacts with ZFHX3, MLLT3, MLLT1, HSF4, EP300, TES, EIF3C, MTMR6 and PSMA6. The cofactor is Fe(2+). Widely expressed, with highest expression in pancreas, ovary and spleen.

It is found in the cytoplasm. The protein resides in the nucleus. It localises to the nucleolus. The protein localises to the midbody. It carries out the reaction an N(6)-methyl-2'-deoxyadenosine in DNA + 2-oxoglutarate + O2 = a 2'-deoxyadenosine in DNA + formaldehyde + succinate + CO2. The enzyme catalyses N(6)-methyl-L-lysyl-[protein] + 2-oxoglutarate + O2 = L-lysyl-[protein] + formaldehyde + succinate + CO2. Dioxygenase that mediates demethylation of actin monomethylated at 'Lys-84' (K84me1), thereby acting as a regulator of actomyosin-processes. Demethylation of actin K84me1 is required for maintaining actomyosin dynamics supporting normal cleavage furrow ingression during cytokinesis and cell migration. In addition to proteins, also demethylates DNA: specifically demethylates DNA methylated on the 6th position of adenine (N(6)-methyladenosine) DNA, thereby regulating Polycomb silencing. In Homo sapiens (Human), this protein is Alpha-ketoglutarate-dependent dioxygenase alkB homolog 4.